Reading from the N-terminus, the 35-residue chain is Antimicrobial peptide 3 (35 aa).

Residues 4–35 (GGECGGRFGGCAGGQCCSRFGFCGSGPKYCAH) enclose the Chitin-binding type-1 domain. Cystine bridges form between Cys7–Cys20, Cys14–Cys26, and Cys19–Cys33.

Contains 3 disulfide bonds. Expressed in leaf, flower, stem and seed with highest expression in leaf (at protein level).

Its function is as follows. Has antifungal activity against A.niger (IC(50)=5.4 uM), B.sorokiniana (IC(50)=2.0 uM), B.cinerea (IC(50)=1.6 uM), F.solani (IC(50)=3.7 uM) and A.alternata (IC(50)=5.0 uM). Binds chitin in vitro. Has no antibacterial activity at concentrations up to 10 uM. The sequence is that of Antimicrobial peptide 3 from Stellaria media (Common chickweed).